A 300-amino-acid polypeptide reads, in one-letter code: MDLVEEILRLKEERNAIILAHNYQLPEVQDIADFIGDSLELARRATRVDADVIVFAGVDFMAETAKILNPDKVVLIPSREATCAMANMLKVEHILEAKRKYPNAPVVLYVNSTAEAKAYADVTVTSANAVEVVKKLDSDVVIFGPDKNLAHYVAKMTGKKIIPVPSKGHCYVHQKFTLDDVERAKKLHPNAKLMIHPECIPEVQEKADIIASTGGMIKRACEWDEWVVFTEREMVYRLRKLYPQKKFYPAREDAFCIGMKAITLKNIYESLKDMKYKVEVPEEIARKARKAIERMLEMSK.

Iminosuccinate contacts are provided by His21 and Ser38. Cys83 contributes to the [4Fe-4S] cluster binding site. Iminosuccinate-binding positions include Tyr109–Asn111 and Ser126. Cys170 contacts [4Fe-4S] cluster. Residues His196–Glu198 and Thr213 each bind iminosuccinate. Cys256 is a binding site for [4Fe-4S] cluster.

This sequence belongs to the quinolinate synthase family. Type 2 subfamily. In terms of assembly, monomer. Homodimer. [4Fe-4S] cluster is required as a cofactor.

It localises to the cytoplasm. The enzyme catalyses iminosuccinate + dihydroxyacetone phosphate = quinolinate + phosphate + 2 H2O + H(+). The protein operates within cofactor biosynthesis; NAD(+) biosynthesis; quinolinate from iminoaspartate: step 1/1. Catalyzes the condensation of iminoaspartate with dihydroxyacetone phosphate to form quinolinate. This chain is Quinolinate synthase, found in Pyrococcus horikoshii (strain ATCC 700860 / DSM 12428 / JCM 9974 / NBRC 100139 / OT-3).